The primary structure comprises 65 residues: Gene 51 protein (65 aa).

The polypeptide is Gene 51 protein (51) (Mycobacterium phage D29 (Mycobacteriophage D29)).